A 171-amino-acid chain; its full sequence is MTRLHAFNREQLLASARGELFGAAAGRLPNDPMLMFDRITEIREDGGPHGKGMVRAELDIRPDLWFFGCHFIGDPVMPGCLGLDAMWQLTGFFLTWLGAPGKGRALGCGEVKFTGQVLPDAKLVRYEIDISRVINRKLVMAQSDARMYVDDREIYSARDLRVGLFTETGSF.

His-70 is a catalytic residue.

Belongs to the thioester dehydratase family. FabA subfamily. Homodimer.

It localises to the cytoplasm. The enzyme catalyses a (3R)-hydroxyacyl-[ACP] = a (2E)-enoyl-[ACP] + H2O. It carries out the reaction (3R)-hydroxydecanoyl-[ACP] = (2E)-decenoyl-[ACP] + H2O. It catalyses the reaction (2E)-decenoyl-[ACP] = (3Z)-decenoyl-[ACP]. Its pathway is lipid metabolism; fatty acid biosynthesis. Necessary for the introduction of cis unsaturation into fatty acids. Catalyzes the dehydration of (3R)-3-hydroxydecanoyl-ACP to E-(2)-decenoyl-ACP and then its isomerization to Z-(3)-decenoyl-ACP. Can catalyze the dehydratase reaction for beta-hydroxyacyl-ACPs with saturated chain lengths up to 16:0, being most active on intermediate chain length. In Stenotrophomonas maltophilia (strain R551-3), this protein is 3-hydroxydecanoyl-[acyl-carrier-protein] dehydratase.